The following is a 335-amino-acid chain: Flagellar P-ring protein (335 aa).

Positions 1–24 (MNKITNFLILSAVLFFSLIESANA) are cleaved as a signal peptide.

This sequence belongs to the FlgI family. The basal body constitutes a major portion of the flagellar organelle and consists of four rings (L,P,S, and M) mounted on a central rod.

It is found in the periplasm. The protein localises to the bacterial flagellum basal body. In terms of biological role, assembles around the rod to form the L-ring and probably protects the motor/basal body from shearing forces during rotation. The protein is Flagellar P-ring protein of Bdellovibrio bacteriovorus (strain ATCC 15356 / DSM 50701 / NCIMB 9529 / HD100).